The sequence spans 1258 residues: Non-secreted LysM effector LysM19 (1258 aa).

The interval Val148–Ser168 is disordered. The segment covering Ser157–Ser168 has biased composition (basic and acidic residues). 2 LysM domains span residues Ile1028 to Leu1073 and Arg1179 to Thr1227.

It belongs to the secreted LysM effector family.

Its function is as follows. Non-secreted LysM effector that might be involved in manipulation of host defenses for successful infection. The sequence is that of Non-secreted LysM effector LysM19 from Penicillium expansum (Blue mold rot fungus).